The chain runs to 261 residues: Small ribosomal subunit protein uS2 (261 aa).

This sequence belongs to the universal ribosomal protein uS2 family.

In Streptococcus mutans serotype c (strain ATCC 700610 / UA159), this protein is Small ribosomal subunit protein uS2.